The primary structure comprises 70 residues: Putative membrane protein insertion efficiency factor (70 aa).

It belongs to the UPF0161 family.

Its subcellular location is the cell membrane. Could be involved in insertion of integral membrane proteins into the membrane. This chain is Putative membrane protein insertion efficiency factor, found in Moorella thermoacetica (strain ATCC 39073 / JCM 9320).